A 448-amino-acid polypeptide reads, in one-letter code: GTPase Der (448 aa).

2 EngA-type G domains span residues 3–167 (PVIA…EPPE) and 182–355 (TRLA…ASAT). GTP-binding positions include 9–16 (GRPNVGKS), 56–60 (DTGGF), 119–122 (NKAE), 188–195 (GRPNVGKS), 235–239 (DTAGL), and 300–303 (NKWD). Residues 356-440 (RKLPTPQLTR…PMRIELRASH (85 aa)) form the KH-like domain.

It belongs to the TRAFAC class TrmE-Era-EngA-EngB-Septin-like GTPase superfamily. EngA (Der) GTPase family. In terms of assembly, associates with the 50S ribosomal subunit.

GTPase that plays an essential role in the late steps of ribosome biogenesis. The sequence is that of GTPase Der from Leptothrix cholodnii (strain ATCC 51168 / LMG 8142 / SP-6) (Leptothrix discophora (strain SP-6)).